The primary structure comprises 401 residues: UPF0242 protein CPn_0755/CP_1117/CPj0755/CpB0783 (401 aa).

It belongs to the UPF0242 family.

This Chlamydia pneumoniae (Chlamydophila pneumoniae) protein is UPF0242 protein CPn_0755/CP_1117/CPj0755/CpB0783.